Reading from the N-terminus, the 861-residue chain is Leucine--tRNA ligase (861 aa).

The 'HIGH' region motif lies at 42–52 (PYPSGKLHMGH). A 'KMSKS' region motif is present at residues 620–624 (KMSKS). K623 contacts ATP.

The protein belongs to the class-I aminoacyl-tRNA synthetase family.

The protein localises to the cytoplasm. It carries out the reaction tRNA(Leu) + L-leucine + ATP = L-leucyl-tRNA(Leu) + AMP + diphosphate. The sequence is that of Leucine--tRNA ligase from Hahella chejuensis (strain KCTC 2396).